A 666-amino-acid chain; its full sequence is DNA ligase (666 aa).

NAD(+)-binding positions include aspartate 34–aspartate 38, serine 83–leucine 84, and glutamate 114. Lysine 116 serves as the catalytic N6-AMP-lysine intermediate. Positions 137, 171, 286, and 310 each coordinate NAD(+). Zn(2+)-binding residues include cysteine 404, cysteine 407, cysteine 422, and cysteine 427. Residues asparagine 588–glutamate 666 form the BRCT domain.

It belongs to the NAD-dependent DNA ligase family. LigA subfamily. Requires Mg(2+) as cofactor. The cofactor is Mn(2+).

It catalyses the reaction NAD(+) + (deoxyribonucleotide)n-3'-hydroxyl + 5'-phospho-(deoxyribonucleotide)m = (deoxyribonucleotide)n+m + AMP + beta-nicotinamide D-nucleotide.. DNA ligase that catalyzes the formation of phosphodiester linkages between 5'-phosphoryl and 3'-hydroxyl groups in double-stranded DNA using NAD as a coenzyme and as the energy source for the reaction. It is essential for DNA replication and repair of damaged DNA. In Mesoplasma florum (strain ATCC 33453 / NBRC 100688 / NCTC 11704 / L1) (Acholeplasma florum), this protein is DNA ligase.